A 299-amino-acid chain; its full sequence is Probable endonuclease 4 (299 aa).

Residues His-69, His-110, Glu-145, Asp-179, His-182, His-214, Asp-227, His-229, and Glu-259 each contribute to the Zn(2+) site.

The protein belongs to the AP endonuclease 2 family. The cofactor is Zn(2+).

The enzyme catalyses Endonucleolytic cleavage to 5'-phosphooligonucleotide end-products.. Endonuclease IV plays a role in DNA repair. It cleaves phosphodiester bonds at apurinic or apyrimidinic (AP) sites, generating a 3'-hydroxyl group and a 5'-terminal sugar phosphate. The protein is Probable endonuclease 4 of Geobacillus kaustophilus (strain HTA426).